The primary structure comprises 556 residues: Arginine--tRNA ligase (556 aa).

Residues 132-142 (ANPTGDLHLGH) carry the 'HIGH' region motif.

Belongs to the class-I aminoacyl-tRNA synthetase family. As to quaternary structure, monomer.

It localises to the cytoplasm. The enzyme catalyses tRNA(Arg) + L-arginine + ATP = L-arginyl-tRNA(Arg) + AMP + diphosphate. This is Arginine--tRNA ligase from Listeria monocytogenes serovar 1/2a (strain ATCC BAA-679 / EGD-e).